The following is a 594-amino-acid chain: uncharacterized protein (594 aa).

Positions 11–38 (CELCRRKKIRCNRELPSCQNCIVYQEEC) form a DNA-binding region, zn(2)-C6 fungal-type. The helical transmembrane segment at 503 to 523 (YLWVFLYCPFTPFLVLFSNIV) threads the bilayer.

The protein resides in the nucleus. It localises to the membrane. This is an uncharacterized protein from Schizosaccharomyces pombe (strain 972 / ATCC 24843) (Fission yeast).